The primary structure comprises 503 residues: Cytochrome P450 11B1, mitochondrial (503 aa).

The transit peptide at 1-24 (MALWAKARVWMAGPWLSLHRARPL) directs the protein to the mitochondrion. Cysteine 450 contributes to the heme binding site.

It belongs to the cytochrome P450 family. Heme is required as a cofactor.

The protein resides in the mitochondrion inner membrane. The catalysed reaction is a steroid + 2 reduced [adrenodoxin] + O2 + 2 H(+) = an 11beta-hydroxysteroid + 2 oxidized [adrenodoxin] + H2O. It catalyses the reaction 11-deoxycortisol + 2 reduced [adrenodoxin] + O2 + 2 H(+) = cortisol + 2 oxidized [adrenodoxin] + H2O. The enzyme catalyses 21-hydroxyprogesterone + 2 reduced [adrenodoxin] + O2 + 2 H(+) = corticosterone + 2 oxidized [adrenodoxin] + H2O. It carries out the reaction corticosterone + 2 reduced [adrenodoxin] + O2 + 2 H(+) = 18-hydroxycorticosterone + 2 oxidized [adrenodoxin] + H2O. The catalysed reaction is 18-hydroxycorticosterone + 2 reduced [adrenodoxin] + O2 + 2 H(+) = aldosterone + 2 oxidized [adrenodoxin] + 2 H2O. It catalyses the reaction 21-hydroxyprogesterone + 2 reduced [adrenodoxin] + O2 + 2 H(+) = 19-hydroxy-11-deoxycorticosterone + 2 oxidized [adrenodoxin] + H2O. The enzyme catalyses 19-hydroxy-11-deoxycorticosterone + 2 reduced [adrenodoxin] + O2 + 2 H(+) = 19-oxo-11-deoxycorticosterone + 2 oxidized [adrenodoxin] + 2 H2O. It functions in the pathway steroid biosynthesis; glucocorticoid biosynthesis. It participates in steroid hormone biosynthesis. In terms of biological role, a cytochrome P450 monooxygenase that catalyzes the biosynthesis of aldosterone and other adrenal corticoids. Differing from other species (such as human, rat and mice), it is able to catalyze three sequential oxidative reactions of 11-deoxycorticosterone (21-hydroxyprogesterone), namely 11-beta hydroxylation, followed by two successive oxidations at C18 yielding 18-hydroxy and then 18-oxo intermediates, and ending with the formation of aldosterone. Steroid 11beta, 18- and 19-hydroxylase. Mechanistically, uses molecular oxygen inserting one oxygen atom into a substrate and reducing the second into a water molecule. Two electrons are provided by NADPH via a two-protein mitochondrial transfer system comprising flavoprotein FDXR (adrenodoxin/ferredoxin reductase) and nonheme iron-sulfur protein FDX1 or FDX2 (adrenodoxin/ferredoxin). This Ovis aries (Sheep) protein is Cytochrome P450 11B1, mitochondrial (CYP11B1).